The chain runs to 844 residues: RING finger containing E3 ubiquitin-protein ligase WSV222 (844 aa).

229–236 contacts ATP; that stretch reads AEDDKGKT. Residues 308 to 359 form an RING-type; atypical zinc finger; the sequence is CGVCATSVEEDENEGKTTSLSWYQMNCKHYIHCECLMGMCAAAGNVQCPMCR.

In terms of assembly, interacts with host UBE2E1/UBCH6; this interaction results in WSV222 auto-ubiquitination. Interacts with host tumor suppressor-like protein.

The enzyme catalyses S-ubiquitinyl-[E2 ubiquitin-conjugating enzyme]-L-cysteine + [acceptor protein]-L-lysine = [E2 ubiquitin-conjugating enzyme]-L-cysteine + N(6)-ubiquitinyl-[acceptor protein]-L-lysine.. It functions in the pathway protein modification; protein ubiquitination. Probable E3 ubiquitin-protein ligase which accepts ubiquitin from the E2 ubiquitin-conjugating enzyme UBE2E1/UBCH6 in the form of a thioester and then directly transfers the ubiquitin to targeted substrates. Mediates ubiquitination of host tumor-suppressor-like protein (TSL) targeting it for degradation. Might function as an anti-apoptosis protein by counteracting TSL-induced apoptosis. The protein is RING finger containing E3 ubiquitin-protein ligase WSV222 of White spot syndrome virus (isolate Shrimp/China/Tongan/1996) (WSSV).